The primary structure comprises 273 residues: Tyrosinase (273 aa).

The signal sequence occupies residues 1-18; that stretch reads MCLLALGFLLGILQPASG. N-linked (GlcNAc...) asparagine glycosylation is found at N86 and N169. H180, H202, and H211 together coordinate Cu cation. A glycan (N-linked (GlcNAc...) asparagine) is linked at N230.

It belongs to the tyrosinase family. Cu(2+) serves as cofactor.

It is found in the melanosome membrane. It carries out the reaction 2 L-dopa + O2 = 2 L-dopaquinone + 2 H2O. The enzyme catalyses L-tyrosine + O2 = L-dopaquinone + H2O. In terms of biological role, this is a copper-containing oxidase that functions in the formation of pigments such as melanins and other polyphenolic compounds. The polypeptide is Tyrosinase (TYR) (Pelodiscus sinensis (Chinese softshell turtle)).